The sequence spans 386 residues: Skeletal aspartic acid-rich protein 1 (386 aa).

The N-terminal stretch at 1–24 (MAFVSCFHLRLLFLCLALFMAAEC) is a signal peptide. Disordered regions lie at residues 33–145 (VDSD…PFSL) and 244–291 (EVTD…DCPH). Residues 63 to 107 (YDASDDNDNDNDDDDNNDNDNDNDDDNDVDRDNDNDDDDFDDSND) are compositionally biased toward acidic residues. Composition is skewed to basic and acidic residues over residues 133–142 (HSVESFEDRP) and 244–265 (EVTD…KDTP). The span at 266-288 (DTDSDPDDSSDNANDGDDDDDDD) shows a compositional bias: acidic residues.

Component of the acid-insoluble and acid-soluble organic matrix of the aragonitic skeleton (at protein level).

It is found in the secreted. The chain is Skeletal aspartic acid-rich protein 1 from Acropora millepora (Staghorn coral).